A 314-amino-acid chain; its full sequence is MFSINPLENLKVYISSRPPLVVFMISVSAMAIAFLTLGYFFKIKEIKSPEMAEDWNTFLLRFNDLDLCVSENETLKHLTNDTTTPESTMTSGQARASTQSPQALEDSGPVNISVSITLTLDPLKPFGGYSRNVTHLYSTILGHQIGLSGREAHEEINITFTLPTAWSSDDCALHGHCEQVVFTACMTLTASPGVFPVTVQPPHCVPDTYSNATLWYKIFTTARDANTKYAQDYNPFWCYKGAIGKVYHALNPKLTVIVPDDDRSLINLHLMHTSYFLFVMVITMFCYAVIKGRPSKLRQSNPEFCPEKVALAEA.

Residues 21 to 41 (VVFMISVSAMAIAFLTLGYFF) form a helical membrane-spanning segment. Residues 78–106 (LTNDTTTPESTMTSGQARASTQSPQALED) form a disordered region. The span at 80–102 (NDTTTPESTMTSGQARASTQSPQ) shows a compositional bias: polar residues. 3 helical membrane-spanning segments follow: residues 179 to 199 (QVVF…PVTV), 236 to 258 (FWCY…TVIV), and 270 to 290 (LMHT…YAVI).

Belongs to the TMEM248 family.

Its subcellular location is the membrane. The protein is Transmembrane protein 248 (TMEM248) of Homo sapiens (Human).